Consider the following 277-residue polypeptide: Type II restriction enzyme RsrI (277 aa).

It belongs to the EcoRI type II restriction endonuclease family. Homodimer. Mg(2+) serves as cofactor.

The catalysed reaction is Endonucleolytic cleavage of DNA to give specific double-stranded fragments with terminal 5'-phosphates.. In terms of biological role, a P subtype restriction enzyme that recognizes the double-stranded sequence 5'-GAATTC-3' and cleaves after G-1. This chain is Type II restriction enzyme RsrI (rsrIR), found in Cereibacter sphaeroides (Rhodobacter sphaeroides).